The primary structure comprises 184 residues: MAILSDKWIREAAQTRGMIEPFEEAQRRDGCISYGLSSFGYDARVAPEFKIFTNVNSAVVDPKDFDGDSLVDRETEVCIIPPNSFALARTVEYFRIPEDVLVICLGKSTYARCGIIVNVTPLEPGWEGHVTLEFSNTTPLPAKIYANEGACQFLFLQGNERPEVTYADRAGKYMGQRGVTLPRL.

Residues 107 to 112 (KSTYAR), 131 to 133 (TLE), Gln152, Tyr166, and Gln176 contribute to the dCTP site. Glu133 (proton donor/acceptor) is an active-site residue.

The protein belongs to the dCTP deaminase family. As to quaternary structure, homotrimer.

It catalyses the reaction dCTP + H2O + H(+) = dUTP + NH4(+). The protein operates within pyrimidine metabolism; dUMP biosynthesis; dUMP from dCTP (dUTP route): step 1/2. In terms of biological role, catalyzes the deamination of dCTP to dUTP. The sequence is that of dCTP deaminase from Erythrobacter litoralis (strain HTCC2594).